The chain runs to 653 residues: Macrolide export ATP-binding/permease protein MacB (653 aa).

Positions I6–P244 constitute an ABC transporter domain. G42–S49 provides a ligand contact to ATP. 4 consecutive transmembrane segments (helical) span residues L275–G295, F525–M545, F576–L596, and W616–W636.

The protein belongs to the ABC transporter superfamily. Macrolide exporter (TC 3.A.1.122) family. In terms of assembly, homodimer. Part of the tripartite efflux system MacAB-TolC, which is composed of an inner membrane transporter, MacB, a periplasmic membrane fusion protein, MacA, and an outer membrane component, TolC. The complex forms a large protein conduit and can translocate molecules across both the inner and outer membranes. Interacts with MacA.

Its subcellular location is the cell inner membrane. Functionally, part of the tripartite efflux system MacAB-TolC. MacB is a non-canonical ABC transporter that contains transmembrane domains (TMD), which form a pore in the inner membrane, and an ATP-binding domain (NBD), which is responsible for energy generation. Confers resistance against macrolides. The polypeptide is Macrolide export ATP-binding/permease protein MacB (Sodalis glossinidius (strain morsitans)).